Consider the following 330-residue polypeptide: Malate dehydrogenase (330 aa).

Position 11-17 (11-17 (GGAGQIA)) interacts with NAD(+). Residues Arg92 and Arg98 each contribute to the substrate site. NAD(+) is bound by residues Asn105, Gln112, and 129–131 (VGN). Residues Asn131 and Arg162 each contribute to the substrate site. Catalysis depends on His187, which acts as the Proton acceptor.

The protein belongs to the LDH/MDH superfamily. MDH type 2 family.

It carries out the reaction (S)-malate + NAD(+) = oxaloacetate + NADH + H(+). Its function is as follows. Catalyzes the reversible oxidation of malate to oxaloacetate. The sequence is that of Malate dehydrogenase from Protochlamydia amoebophila (strain UWE25).